The chain runs to 555 residues: Dihydroxy-acid dehydratase (555 aa).

Residue Asp-78 coordinates Mg(2+). Cys-119 is a binding site for [2Fe-2S] cluster. Mg(2+) contacts are provided by Asp-120 and Lys-121. At Lys-121 the chain carries N6-carboxylysine. Cys-191 lines the [2Fe-2S] cluster pocket. Glu-444 provides a ligand contact to Mg(2+). Residue Ser-470 is the Proton acceptor of the active site.

This sequence belongs to the IlvD/Edd family. In terms of assembly, homodimer. It depends on [2Fe-2S] cluster as a cofactor. Mg(2+) is required as a cofactor.

It carries out the reaction (2R)-2,3-dihydroxy-3-methylbutanoate = 3-methyl-2-oxobutanoate + H2O. The catalysed reaction is (2R,3R)-2,3-dihydroxy-3-methylpentanoate = (S)-3-methyl-2-oxopentanoate + H2O. It functions in the pathway amino-acid biosynthesis; L-isoleucine biosynthesis; L-isoleucine from 2-oxobutanoate: step 3/4. Its pathway is amino-acid biosynthesis; L-valine biosynthesis; L-valine from pyruvate: step 3/4. In terms of biological role, functions in the biosynthesis of branched-chain amino acids. Catalyzes the dehydration of (2R,3R)-2,3-dihydroxy-3-methylpentanoate (2,3-dihydroxy-3-methylvalerate) into 2-oxo-3-methylpentanoate (2-oxo-3-methylvalerate) and of (2R)-2,3-dihydroxy-3-methylbutanoate (2,3-dihydroxyisovalerate) into 2-oxo-3-methylbutanoate (2-oxoisovalerate), the penultimate precursor to L-isoleucine and L-valine, respectively. This is Dihydroxy-acid dehydratase from Maridesulfovibrio salexigens (strain ATCC 14822 / DSM 2638 / NCIMB 8403 / VKM B-1763) (Desulfovibrio salexigens).